Here is a 209-residue protein sequence, read N- to C-terminus: Large ribosomal subunit protein uL3 (209 aa).

Gln-150 bears the N5-methylglutamine mark.

The protein belongs to the universal ribosomal protein uL3 family. Part of the 50S ribosomal subunit. Forms a cluster with proteins L14 and L19. Methylated by PrmB.

Its function is as follows. One of the primary rRNA binding proteins, it binds directly near the 3'-end of the 23S rRNA, where it nucleates assembly of the 50S subunit. The polypeptide is Large ribosomal subunit protein uL3 (Vibrio cholerae serotype O1 (strain ATCC 39541 / Classical Ogawa 395 / O395)).